A 130-amino-acid polypeptide reads, in one-letter code: kinetoplast-associated protein 2-1 (130 aa).

Residues 1-10 (MLRRTVSNFA) constitute a propeptide that is removed on maturation. The interval 89-130 (LTKKWNETKQAQREKAQKAQKKTKSAKSKVKKAAKKSKKSKK) is disordered. Over residues 92-105 (KWNETKQAQREKAQ) the composition is skewed to basic and acidic residues. The span at 106–130 (KAQKKTKSAKSKVKKAAKKSKKSKK) shows a compositional bias: basic residues.

This sequence belongs to the KAP family. Associates with the kinetoplast DNA network.

The protein localises to the mitochondrion matrix. It localises to the kinetoplast. Histone H1-like DNA-binding protein involved in the organization and segregation of kinetoplast DNA (kDNA). The mitochondrial DNA of kinetoplastid protozoa consists of about 5,000 minicircles and 20 to 30 maxicircles. These circular DNAs are held together by catenation into a highly organized compact disk structure referred to as a kinetoplast DNA (kDNA) network. Binds preferentially to a specific fragment of minicircle DNA and is able to compact kDNA networks through DNA charge neutralization and condensation. This Crithidia fasciculata protein is kinetoplast-associated protein 2-1 (KAP2-1).